The primary structure comprises 82 residues: Small ribosomal subunit protein bS16 (82 aa).

The protein belongs to the bacterial ribosomal protein bS16 family.

The sequence is that of Small ribosomal subunit protein bS16 from Shewanella sp. (strain MR-4).